The primary structure comprises 147 residues: Ubiquitin-conjugating enzyme E2 5A (147 aa).

Basic and acidic residues predominate over residues 1–15 (MASKRIQKELKDLQK). Residues 1-24 (MASKRIQKELKDLQKDPPTSCSAG) are disordered. The UBC core domain occupies 1–147 (MASKRIQKEL…ARTWTQRYAM (147 aa)). Residue C85 is the Glycyl thioester intermediate of the active site.

Belongs to the ubiquitin-conjugating enzyme family.

The catalysed reaction is S-ubiquitinyl-[E1 ubiquitin-activating enzyme]-L-cysteine + [E2 ubiquitin-conjugating enzyme]-L-cysteine = [E1 ubiquitin-activating enzyme]-L-cysteine + S-ubiquitinyl-[E2 ubiquitin-conjugating enzyme]-L-cysteine.. It participates in protein modification; protein ubiquitination. In terms of biological role, E2 conjugating enzyme that associates with the E3 ubiquitin-protein ligase EL5 to mediate ubiquitination of target proteins. The polypeptide is Ubiquitin-conjugating enzyme E2 5A (UBC5A) (Oryza sativa subsp. japonica (Rice)).